The primary structure comprises 2381 residues: Protein Ycf2 (2381 aa).

1655-1662 lines the ATP pocket; it reads GPMETGRS.

The protein belongs to the Ycf2 family.

It localises to the plastid. It is found in the chloroplast stroma. Its function is as follows. Probable ATPase of unknown function. Its presence in a non-photosynthetic plant (Epifagus virginiana) and experiments in tobacco indicate that it has an essential function which is probably not related to photosynthesis. The polypeptide is Protein Ycf2 (Angiopteris evecta (Mule's foot fern)).